Consider the following 154-residue polypeptide: Endoribonuclease YbeY (154 aa).

3 residues coordinate Zn(2+): H113, H117, and H123.

This sequence belongs to the endoribonuclease YbeY family. Requires Zn(2+) as cofactor.

It is found in the cytoplasm. In terms of biological role, single strand-specific metallo-endoribonuclease involved in late-stage 70S ribosome quality control and in maturation of the 3' terminus of the 16S rRNA. The sequence is that of Endoribonuclease YbeY from Aeromonas hydrophila subsp. hydrophila (strain ATCC 7966 / DSM 30187 / BCRC 13018 / CCUG 14551 / JCM 1027 / KCTC 2358 / NCIMB 9240 / NCTC 8049).